Reading from the N-terminus, the 328-residue chain is Phosphatidylglycerol--prolipoprotein diacylglyceryl transferase (328 aa).

Helical transmembrane passes span 15 to 35 (VIQG…ILIS), 58 to 78 (FMFS…TLVY), and 106 to 126 (GMAI…IINT). R156 contacts a 1,2-diacyl-sn-glycero-3-phospho-(1'-sn-glycerol). 2 helical membrane-spanning segments follow: residues 242–262 (GFIF…IEYL) and 289–309 (ISMG…WVVV).

It belongs to the Lgt family.

Its subcellular location is the cell inner membrane. It carries out the reaction L-cysteinyl-[prolipoprotein] + a 1,2-diacyl-sn-glycero-3-phospho-(1'-sn-glycerol) = an S-1,2-diacyl-sn-glyceryl-L-cysteinyl-[prolipoprotein] + sn-glycerol 1-phosphate + H(+). It functions in the pathway protein modification; lipoprotein biosynthesis (diacylglyceryl transfer). Catalyzes the transfer of the diacylglyceryl group from phosphatidylglycerol to the sulfhydryl group of the N-terminal cysteine of a prolipoprotein, the first step in the formation of mature lipoproteins. This is Phosphatidylglycerol--prolipoprotein diacylglyceryl transferase from Borrelia garinii subsp. bavariensis (strain ATCC BAA-2496 / DSM 23469 / PBi) (Borreliella bavariensis).